Reading from the N-terminus, the 305-residue chain is Tetraspanin-12 (305 aa).

Residues 1–12 are Cytoplasmic-facing; it reads MAREDSVRCLRC. Residues cysteine 9 and cysteine 12 are each lipidated (S-palmitoyl cysteine). Residues 13-33 form a helical membrane-spanning segment; that stretch reads LLYALNLLFWLMSISVLGVSA. Residues 34–59 are Extracellular-facing; sequence WIRDYLNNVLTLTAETRVEEAVILTY. Residues 60-80 form a helical membrane-spanning segment; the sequence is FPVVHPVMIAVCCFLILVGML. At 81–89 the chain is on the cytoplasmic side; sequence GYCGTVKRN. Cysteine 83 carries the S-palmitoyl cysteine lipid modification. A helical transmembrane segment spans residues 90-110; sequence LLLLVWYFGSLLVIFCVELAC. The Extracellular segment spans residues 111-224; sequence GVWTYEQEIT…RGTKQLQVLR (114 aa). A helical membrane pass occupies residues 225-245; that stretch reads FLGISIGVTQILAMILTITLL. Residues 246–305 lie on the Cytoplasmic side of the membrane; sequence WALYYDRRDPGADQIMSLKNDTSQQLSCHSVELLKPSLTGIFEHTSMANSFNTHFEMEEL.

Belongs to the tetraspanin (TM4SF) family. Component of a complex, at least composed of TSPAN12, FZD4 and norrin (NDP). Palmitoylated; required for interaction with ADAM10. The precise position of palmitoylated residues is unclear and occurs either on Cys-9, Cys-12 and/or Cys-83.

The protein localises to the cell membrane. Functionally, regulator of cell surface receptor signal transduction. Plays a central role in retinal vascularization by regulating norrin (NDP) signal transduction. Acts in concert with norrin (NDP) to promote FZD4 multimerization and subsequent activation of FZD4, leading to promote accumulation of beta-catenin (CTNNB1) and stimulate LEF/TCF-mediated transcriptional programs. Suprisingly, it only activates the norrin (NDP)-dependent activation of FZD4, while it does not activate the Wnt-dependent activation of FZD4, suggesting the existence of a Wnt-independent signaling that also promote accumulation the beta-catenin (CTNNB1). The polypeptide is Tetraspanin-12 (TSPAN12) (Gallus gallus (Chicken)).